A 730-amino-acid chain; its full sequence is Pentatricopeptide repeat-containing protein At5g64320, mitochondrial (730 aa).

The transit peptide at 1 to 18 directs the protein to the mitochondrion; that stretch reads MVMLARSKLALDVSRRSQ. PPR repeat units follow at residues 110–144, 145–175, 181–215, 216–250, 251–285, 286–320, 321–351, 352–387, 388–422, 423–457, 458–492, 493–527, 528–562, 563–597, 598–632, 633–667, and 668–702; these read SFDVYQVLIGKLGANGEFKTIDRLLIQMKDEGIVF, KESLFISIMRDYDKAGFPGQTTRLMLEMRNV, TFKSYNVVLEILVSGNCHKVAANVFYDMLSRKIPP, TLFTFGVVMKAFCAVNEIDSALSLLRDMTKHGCVP, NSVIYQTLIHSLSKCNRVNEALQLLEEMFLMGCVP, DAETFNDVILGLCKFDRINEAAKMVNRMLIRGFAP, DDITYGYLMNGLCKIGRVDAAKDLFYRIPKP, EIVIFNTLIHGFVTHGRLDDAKAVLSDMVTSYGIVP, DVCTYNSLIYGYWKEGLVGLALEVLHDMRNKGCKP, NVYSYTILVDGFCKLGKIDEAYNVLNEMSADGLKP, NTVGFNCLISAFCKEHRIPEAVEIFREMPRKGCKP, DVYTFNSLISGLCEVDEIKHALWLLRDMISEGVVA, NTVTYNTLINAFLRRGEIKEARKLVNEMVFQGSPL, DEITYNSLIKGLCRAGEVDKARSLFEKMLRDGHAP, SNISCNILINGLCRSGMVEEAVEFQKEMVLRGSTP, DIVTFNSLINGLCRAGRIEDGLTMFRKLQAEGIPP, and DTVTFNTLMSWLCKGGFVYDACLLLDEGIEDGFVP.

This sequence belongs to the PPR family. P subfamily.

The protein resides in the mitochondrion. This Arabidopsis thaliana (Mouse-ear cress) protein is Pentatricopeptide repeat-containing protein At5g64320, mitochondrial.